A 183-amino-acid chain; its full sequence is COMM domain-containing protein 8 (183 aa).

The COMM domain occupies 116–183 (QLQDFDWQVK…AANKVVLQLK (68 aa)).

The protein belongs to the COMM domain-containing protein 8 family. In terms of assembly, component of the commander complex consisting of the CCC subcomplex and the retriever subcomplex. Component of the CCC (COMMD/CCDC22/CCDC93) subcomplex consisting of COMMD1, COMMD2, COMMD3, COMMD4, COMMD5, COMMD6, COMMD7, COMMD8, COMMD9, COMMD10, CCDC22 and CCDC93; within the complex forms a heterodimer with COMMD4. Interacts with RELA, RELB, NFKB1/p105. Interacts with CCDC22, CCDC93, SCNN1B, CUL1, CUL2, CUL3, CUL4A, CUL4B, CUL5. Widely expressed with highest expression in thyroid.

Its subcellular location is the cytoplasm. The protein localises to the nucleus. Functionally, scaffold protein in the commander complex that is essential for endosomal recycling of transmembrane cargos; the commander complex is composed of the CCC subcomplex and the retriever subcomplex. May modulate activity of cullin-RING E3 ubiquitin ligase (CRL) complexes. May down-regulate activation of NF-kappa-B. The sequence is that of COMM domain-containing protein 8 (COMMD8) from Homo sapiens (Human).